A 273-amino-acid polypeptide reads, in one-letter code: Putative pyruvate, phosphate dikinase regulatory protein (273 aa).

153–160 (GVSRTSKS) contributes to the ADP binding site.

This sequence belongs to the pyruvate, phosphate/water dikinase regulatory protein family. PDRP subfamily.

It catalyses the reaction N(tele)-phospho-L-histidyl/L-threonyl-[pyruvate, phosphate dikinase] + ADP = N(tele)-phospho-L-histidyl/O-phospho-L-threonyl-[pyruvate, phosphate dikinase] + AMP + H(+). It carries out the reaction N(tele)-phospho-L-histidyl/O-phospho-L-threonyl-[pyruvate, phosphate dikinase] + phosphate + H(+) = N(tele)-phospho-L-histidyl/L-threonyl-[pyruvate, phosphate dikinase] + diphosphate. Bifunctional serine/threonine kinase and phosphorylase involved in the regulation of the pyruvate, phosphate dikinase (PPDK) by catalyzing its phosphorylation/dephosphorylation. This Ehrlichia chaffeensis (strain ATCC CRL-10679 / Arkansas) protein is Putative pyruvate, phosphate dikinase regulatory protein.